Consider the following 338-residue polypeptide: Transcription factor AP-4 (338 aa).

The bHLH domain maps to 48–99; sequence IRREIANSNERRRMQSINAGFQSLKTLIPHTDGEKLSKAAILQQTAEYIFSL. Residues 100-120 form a leucine-zipper 1 region; that stretch reads EQEKTRLLQQNTQLKRFIQEL. Positions 118–141 are disordered; the sequence is QELSGSSPKRRRAEDKDEGIGSPD. Residues serine 123, serine 124, and serine 139 each carry the phosphoserine modification. Lysine 147 is covalently cross-linked (Glycyl lysine isopeptide (Lys-Gly) (interchain with G-Cter in SUMO2)). The segment at 151–179 is leucine-zipper 2; that stretch reads LRREMIELRQQLDKERSVRMMLEEQVRSL. Glycyl lysine isopeptide (Lys-Gly) (interchain with G-Cter in SUMO2) cross-links involve residues lysine 187, lysine 189, and lysine 285. A compositionally biased stretch (basic and acidic residues) spans 283–294; sequence QEKQELEEEQRR. Residues 283–338 form a disordered region; sequence QEKQELEEEQRRAVIVKPVRSCPEAPTSDTASDSEASDSDAMDQSREEPSGDGELP.

Efficient DNA binding requires dimerization with another bHLH protein. Homodimer.

The protein localises to the nucleus. Functionally, transcription factor that activates both viral and cellular genes by binding to the symmetrical DNA sequence 5'-CAGCTG-3'. This Homo sapiens (Human) protein is Transcription factor AP-4 (TFAP4).